Reading from the N-terminus, the 447-residue chain is Phosphoglucosamine mutase (447 aa).

The active-site Phosphoserine intermediate is serine 107. Mg(2+)-binding residues include serine 107, aspartate 246, aspartate 248, and aspartate 250. The residue at position 107 (serine 107) is a Phosphoserine.

The protein belongs to the phosphohexose mutase family. The cofactor is Mg(2+). In terms of processing, activated by phosphorylation.

It catalyses the reaction alpha-D-glucosamine 1-phosphate = D-glucosamine 6-phosphate. Catalyzes the conversion of glucosamine-6-phosphate to glucosamine-1-phosphate. This Ralstonia pickettii (strain 12J) protein is Phosphoglucosamine mutase.